The primary structure comprises 232 residues: UPF0502 protein Aave_3438 (232 aa).

It belongs to the UPF0502 family.

The polypeptide is UPF0502 protein Aave_3438 (Paracidovorax citrulli (strain AAC00-1) (Acidovorax citrulli)).